The primary structure comprises 116 residues: Ribonuclease P protein component (116 aa).

It belongs to the RnpA family. As to quaternary structure, consists of a catalytic RNA component (M1 or rnpB) and a protein subunit.

It catalyses the reaction Endonucleolytic cleavage of RNA, removing 5'-extranucleotides from tRNA precursor.. In terms of biological role, RNaseP catalyzes the removal of the 5'-leader sequence from pre-tRNA to produce the mature 5'-terminus. It can also cleave other RNA substrates such as 4.5S RNA. The protein component plays an auxiliary but essential role in vivo by binding to the 5'-leader sequence and broadening the substrate specificity of the ribozyme. This is Ribonuclease P protein component from Leuconostoc citreum (strain KM20).